Reading from the N-terminus, the 604-residue chain is Linalool synthase Tps-5073L4, chloroplastic (604 aa).

Residues 1–36 constitute a chloroplast transit peptide; sequence MSSMRIYVAIMKKPSVKHVDYVDKKASKPSWRVSSS. Positions 323, 360, 364, 501, and 504 each coordinate (2E)-geranyl diphosphate. Asp360 and Asp364 together coordinate Mg(2+). The DDXXD motif signature appears at 360-364; the sequence is DDVYD. 3 residues coordinate Mg(2+): Asp504, Thr508, and Glu512.

This sequence belongs to the terpene synthase family. Tpsb subfamily. Monomer. Mg(2+) serves as cofactor. The cofactor is Mn(2+).

It is found in the plastid. The protein localises to the chloroplast. The enzyme catalyses (2E)-geranyl diphosphate + H2O = linalool + diphosphate. The protein operates within secondary metabolite biosynthesis; terpenoid biosynthesis. Monoterpene synthase (mono-TPS) involved in the biosynthesis of monoterpenes natural products. Catalyzes the conversion of (2E)-geranyl diphosphate (GPP) into linalool. This Perilla frutescens (Beefsteak mint) protein is Linalool synthase Tps-5073L4, chloroplastic.